We begin with the raw amino-acid sequence, 587 residues long: ATP-dependent lipid A-core flippase (587 aa).

5 helical membrane-spanning segments follow: residues 31–51, 68–88, 145–165, 169–189, and 259–279; these read LIAS…LIYL, LKIM…TNFI, GSLI…AVMF, WELT…ITIV, and VQII…TPLI. Residues 32 to 315 enclose the ABC transmembrane type-1 domain; that stretch reads IASGIALVFN…LTNVNSQFQR (284 aa). An ABC transporter domain is found at 347–583; sequence LEFKNVSFAY…NGAYKQLYSM (237 aa). 381-388 contributes to the ATP binding site; it reads GRSGSGKS.

It belongs to the ABC transporter superfamily. Lipid exporter (TC 3.A.1.106) family. Homodimer.

The protein resides in the cell inner membrane. The enzyme catalyses ATP + H2O + lipid A-core oligosaccharideSide 1 = ADP + phosphate + lipid A-core oligosaccharideSide 2.. Functionally, involved in lipopolysaccharide (LPS) biosynthesis. Translocates lipid A-core from the inner to the outer leaflet of the inner membrane. Transmembrane domains (TMD) form a pore in the inner membrane and the ATP-binding domain (NBD) is responsible for energy generation. The polypeptide is ATP-dependent lipid A-core flippase (Haemophilus influenzae (strain 86-028NP)).